The sequence spans 204 residues: Nascent polypeptide-associated complex subunit alpha (204 aa).

Residues 1 to 19 (MADPRVEELPDEEVPKTNV) are compositionally biased toward basic and acidic residues. 2 disordered regions span residues 1–48 (MADP…HSRN) and 119–167 (LAAA…GLEA). Residues 22-32 (AGSDSESEAGE) show a composition bias toward acidic residues. Residues 46–111 (SRNEKKARKA…AKIEDLNSQA (66 aa)) enclose the NAC-A/B domain. Positions 119-128 (LAAAEAAAGE) are enriched in low complexity. The segment covering 129–151 (HAGHDHDHDHGKGKAPETEAKKE) has biased composition (basic and acidic residues). Residues 152-164 (EEEDDGEEVDETG) are compositionally biased toward acidic residues. One can recognise a UBA domain in the interval 165 to 204 (LEAKDIELVMAQANVSRKKAVKALRENDNDIVNSIMALSI).

It belongs to the NAC-alpha family. Part of the nascent polypeptide-associated complex (NAC), consisting of egd2 and egd1. NAC associates with ribosomes via egd1.

It localises to the cytoplasm. The protein resides in the nucleus. In terms of biological role, component of the nascent polypeptide-associated complex (NAC), a dynamic component of the ribosomal exit tunnel, protecting the emerging polypeptides from interaction with other cytoplasmic proteins to ensure appropriate nascent protein targeting. The NAC complex also promotes mitochondrial protein import by enhancing productive ribosome interactions with the outer mitochondrial membrane and blocks the inappropriate interaction of ribosomes translating non-secretory nascent polypeptides with translocation sites in the membrane of the endoplasmic reticulum. Egd2 may also be involved in transcription regulation. The sequence is that of Nascent polypeptide-associated complex subunit alpha (egd2) from Aspergillus clavatus (strain ATCC 1007 / CBS 513.65 / DSM 816 / NCTC 3887 / NRRL 1 / QM 1276 / 107).